A 91-amino-acid chain; its full sequence is UPF0358 protein SSP1677 (91 aa).

This sequence belongs to the UPF0358 family.

The protein is UPF0358 protein SSP1677 of Staphylococcus saprophyticus subsp. saprophyticus (strain ATCC 15305 / DSM 20229 / NCIMB 8711 / NCTC 7292 / S-41).